Reading from the N-terminus, the 3948-residue chain is MDASEPIAVIGSACRFPGGSDSPSKLWELLKEPRDLLSKVPPERYNADAFYHADATHHGTTNVRHSYFLSEDPSSFDNNFFNIQPGEAEAIDPQQRLLMEVVYQGLCSAGQTIEGLRGSPTAVYVGVMCDDWSGIITRDLEVFPRYGATGMARSIMSNRISYFFDWHGPSMTIDTACSSSLVAVHQAIQTLRSGESEVAIAAGANLILTPGMYVAESKLSMLSPSGRSKMWDQDVDGYARGEGIAAVVLKPLSAAIRDNDHIDCIIRATGINQDGRTPGLTMPSATAQADLIRSTYARAGLDINKAEDRPQFFHAHGTGTPAGDPREAEAISRAFYSPDNLSKDDKLYVGSIKTIIGHTEGTAGLASLIGTSLAIQNKVIPPNMHLDVLNPKVAPFYNNLEVPTSALEWPETRSGQPRRASINSFGFGGTNAHAIIEAYEPNATAHVSGALFSPLTFSASSEPSLRSLLMSYSEYLKLNPQISLKDLAYSLQTRRSTLAYRVAITASTAENASKQLDAIVDGEQSSSISTRQLSKSSPKILGIFTGQGTQWPRMGARLLEESPFASKRLAELDDALSSLPADDRPTWTLREMILADSESSRVAEAAISQPLCTAVQVVLVDLLRHAGIELSAVVGHSSGEIGAAYAAGLLTARDAIRVAYYRGLYAKLAQSPNGHKGAMMAVGTTFEDAADFCELEAFQGRIQIAAKNSPSSITLSGDEDAIIEAIEIFKDEGKFARQLKVDTAYHSSHVIPCAKPYLEAMNRCGIETATATKTQWYSSVHGGQIMSADSLTTSYWVDNMTSAVLFSPAVAQAWEEGGPYDLAIEVGPHPALKTPALDTIEAISEGRPPYTGVIARGKDDIQQFSNALGFIWTHLGPGSIAFENFESVVSGSKDRPSFIQDLPNYPFDHAKQFMSMSRVSGWFNSIQEAPHPLLGRRCHDRETSHSVQWRNVLSHKEIPWLQGHQLQGQIIFPATGYISMAVEAIKILAEPSSLGLITIEDLSITRALAFADEDASIETLFELRILSRSETEIQAEFCCYSGIPHTHTATMGLNATAQIKASLGTPTSDQLSNIAVDDYDLRPVSVDRFYDFLARLGYNYSWPFRGTTSIRRKANFATGTLEDQSGSNWEDQLMVHPGMLDSSLQTTFAAFCCPGDERLWALHLPTSFRSIAINPYFTSAGIGKQNSFTYQSVAIEERKTSKVLVELNLLSEETGDTFLQIEGMELVPFSPATPANDAVLFSRFDYRLAGPDGELTAAEYSFKPEDYKMALDCERIAFYYLRRLVETITPEEKANTLVHYRHLVDWAAYVVPQVANGGNPHIPASAQQDTHDDIQQLLKKHYERVDIRLLESVGENLPQVIRDSGNILEHMTKDGMLQDVYEQGFGLNLVNQYIAHMTAQIAHRYPRMNILEIGAGTGGSTREILPRLGSAFSTYTYTDVSGGFFDMAQDRFKDYADRMIFKTFDMNISPASQGFTEGAYDLVIASNVLHATLELEDMMKHVRSFLKPGGFLIILETVNNDCLRVGLPMGSLPGWWLGAEHGRRWGPTLTLPQWDSLLSKCGFGGIDTTTPPVHKILPGHVFCAQALDERIEILRSPMEHLATLPETKSTQLAVIGGQTLKVHRMCDQISRRLSSRYSSISRFNSIEELNDTGLPESCTVLSLTELDEPLFANMTYGKLEALKILWKQGGSILWITSGARAENPHSYMTTGVGRCMRFEYPNITLQALDIKQISDRCPELIVDHLLRLEILDKWSKELRSDELLWSLEPEIYIEEETAIIPRLYPYESGNARYNAERRKVIKQADMETDRVVFAEFEGKWEIQHASPLHIAQELPSSSDISARTIQITHLSPATVNIAPGVSAMAWAGVDTASNEPVVAVTHIAESPVSIPAGWCIPLDKLDPVKTLTGVSATLIASSILERLVKGETLVVHDAPPHIRAALDKLAKPVSIAIFYTSSDEAMSKLGARYIDRRSPLRVIRASLPKSASKFISLSQDFGKDETSKVISMCLPRDCETINTAHLFGPRNVAQQSAFEKDVSSSLKKAFEEVGSQVNTTASTDLISLKDTPNPIADQVRFAILDCTDTPIQASVHPIDDGRIFRADKTFLLIGLTGELGQSLCKWMVEQGARSIVLTSRRPNVSEHFLGSFAETGAIVKALPMDVTDRTSIEACLETIKKTLPPIAGVVNGAMVLRDALFENMPYEDFMKVLNPKVVGSQLLDEMFYDTPLDFFIFFSSTTAVMGNSGQSNYIAGNMYMNALAAQRKKRGVAASSIDISSIIGLGYVERAEDLSEDTFIKMGYKPMSEQDLQKLFAEAIVLGRPDCHEVCELVTGVTPIYTDAQASDQYLKDVKFGHFLMERLDTQTYTGKTSTVPVRVQLADVKTRADAVAIIKESFIVRLRRVLAVGPDEIINEKVTLVEQGVDSLMAVEVRSWFIKELDVDIPVLKILGGMSVPDLVDESLDLLSPSILDVSSLEAGNAHPAKPTTVIPQTPTRVTPPESSQGTSDQDKPHTGSDSSRSPIDTPLTSWDRQDLSPPDKSDDAPNSTDNLTPPRTFPNELPSIMSYGQAGFWFLNDYLVNKKAFNMAVMLKLTGSIRTQPLENAVQLVAERHEILRTRFFWSEDGDERTPMQGINPPTMKLTIKTIADEKEAETELKRLHDEDWDLGSGEGVKIILLRLSDQVHFLLSGMHHIYLDGYSFSVFFKDLESAYINHRLPPLPVESQYRTFALQQRKMYDDGDLLKSIEYYRQSFPKEFAPIRLFPFATTASRQLANEYSQHEAKLSITPDVSAKVRQLARANRSTSFHVYLAALKILLFSLLPDTEELFIGIADANRGDKKFMGSLGFFLNLLPLRFQRGKPRSRVSSAIQTARDAAYGALQHSQLPFDVLLRELNVPRSDKHTPIFQVFMDYRQVVQERSSWGGCKLSDEKWCNAGTGYDVALEVTENINTDTLLSLRLQKQLYSEEHTQVLLRSYLSVLEYMIRGSDKSVDAAPAWSSYDLKVAVDAGKAPEFKSKWPPTVSHQIDQVIQNNPDKIALKDGNGNVLTYAQMGNRIDTISKALIDAGTVQGTVVGVFQEPSADWICSLLAIFKAGAVYVPLDLRNSIPRLASIVKASRPSVIITDITTDDKVDLIGAKFVTKLQLGSLDESTRQDSTEINHAKVGSLAVILFTSGSTGEPKGLMMTHTNLLSYAEVSSKTFARVDEDLVVLQQSPFSFDFSLDQTMAALTNGGYLYVVPASKRGDPDEISKIMVEESVTYTTATPSEYDLWLRYSTETLQQCNSWKYAFSGGEAMSYKLAREFGTLKLTNLHVFNGYGPAETTILSHRIDLKYADPDLPDPLPAGYPLPGFSVCIVDDKMRPVPLGVQGEIVLGGPCIVSGYLNMPESTRDKFLPDTFFGTSGTVYRSGDRGRLCYDGLLFCDGRLEGNTMIKLRGFRVELDEVEKTIVSHSAGALSHAVATVRGTEEGRYLVAHIVFAPEFPEQDREGVMKSLRQMLPLPPYMRPSVFQVLPDIPRTAHLKIDRKAIQDIPVQTTQSEISKSLTASEKRLSELWRRVLPLDPGTLTHESDFFLIGGNSILLVKLQALLREGLWMAPKLVTLMGSSTLGAMASVLEDCGPVNVIHWDEEIKFPNDLQLATPLRAAGKSTDINVLLTGSSGYLGRHLLLSLLKDHRVAQVHCLCRTSSDQQVVNDPGSKANIVQSDLAQHNLGIPESTYSQLATEVDVIIHCAANRSFWDRYEALKADNLDSTKELVKFVVSSGRAIPLHFLSSGAVAKYNSGLTPPADGGDGYVATKWASEVFMKQAADSTNLPVFSHRPVACESAQQSEEETISIVNELMQIVKLLGCRPSFDGVGGFVDVMPVNEIVEAIHETALNSQTGEGLCILEHKAHQRAYVRSFATVVESDDGLSKLPCIPILEWFGRAKKAGFSYFLASQDLILGSQLFSRR.

The region spanning 4 to 438 (SEPIAVIGSA…GTNAHAIIEA (435 aa)) is the Ketosynthase family 3 (KS3) domain. Residues C177, H316, and H358 each act as for beta-ketoacyl synthase activity in the active site. A malonyl-CoA:ACP transacylase (MAT) domain region spans residues 543–846 (IFTGQGTQWP…LDTIEAISEG (304 aa)). Residues 931–1066 (HPLLGRRCHD…AQIKASLGTP (136 aa)) are N-terminal hotdog fold. Residues 931–1233 (HPLLGRRCHD…MELVPFSPAT (303 aa)) form a dehydratase (DH) domain region. The PKS/mFAS DH domain occupies 931–1235 (HPLLGRRCHD…LVPFSPATPA (305 aa)). Residue H964 is the Proton acceptor; for dehydratase activity of the active site. The C-terminal hotdog fold stretch occupies residues 1081 to 1235 (LRPVSVDRFY…LVPFSPATPA (155 aa)). The active-site Proton donor; for dehydratase activity is the D1141. The methyltransferase (MT) domain stretch occupies residues 1381–1578 (YEQGFGLNLV…TTPPVHKILP (198 aa)). The segment at 2105–2277 (TFLLIGLTGE…VAASSIDISS (173 aa)) is ketoreductase (KR) domain. A Carrier 1 domain is found at 2389-2464 (AIIKESFIVR…DLVDESLDLL (76 aa)). S2424 is subject to O-(pantetheine 4'-phosphoryl)serine. Residues 2475-2555 (EAGNAHPAKP…TDNLTPPRTF (81 aa)) form a disordered region. Composition is skewed to polar residues over residues 2487–2505 (VIPQ…QGTS) and 2513–2528 (GSDS…LTSW). The segment covering 2529-2541 (DRQDLSPPDKSDD) has biased composition (basic and acidic residues). Residues 2542-2551 (APNSTDNLTP) show a composition bias toward polar residues. Residues 2547 to 2976 (DNLTPPRTFP…TQVLLRSYLS (430 aa)) are condensation (C) domain. The interval 3000–3402 (LKVAVDAGKA…PDTFFGTSGT (403 aa)) is adenylation (A) (KR) domain. The Carrier 2 domain occupies 3540–3617 (KSLTASEKRL…AMASVLEDCG (78 aa)). S3577 bears the O-(pantetheine 4'-phosphoryl)serine mark. The reductase (RED) domain stretch occupies residues 3653-3870 (LTGSSGYLGR…MPVNEIVEAI (218 aa)).

In the C-terminal section; belongs to the NRP synthetase family.

The catalysed reaction is L-serine + 7 malonyl-CoA + acetyl-CoA + 2 S-adenosyl-L-methionine + ATP + 8 NADPH + 11 H(+) = (5S)-3-[(2E,6R,8E,10E,12E)-2,6-dimethyltetradeca-2,8,10,12-tetraenoyl]-5-(hydroxymethyl)pyrrolidine-2,4-dione + AMP + 2 S-adenosyl-L-homocysteine + 7 CO2 + diphosphate + 8 NADP(+) + 8 CoA + 6 H2O. It functions in the pathway mycotoxin biosynthesis. In terms of biological role, hybrid PKS-NRPS synthetase; part of the gene cluster that mediates the biosynthesis of HIV-1 integrase inhibitor equisetin and of fusarisetin A, both trans-fused decalin-containing tetramic acids showing also antimicrobial activity. The PKS module of fsa1 together with the enoylreductase fsa3 catalyze the formation of the polyketide unit which is then conjugated to L-serine by the condensation domain of the fsa1 NRPS module. Activity of the Dieckmann cyclase domain (RED) results in release of the Dieckmann product intermediate. Diels-Alderase fsa2 is involved in endo-selective Diels-Alder cycloaddition to form the decalin ring, leading to the production of N-desmethylequisetin also called trichosetin. Subsequent N-methylation is carried out by fsa4 to give equisetin. The enzymatic gene responsible for the conversion of equisetin to fusarisetin A has not been identified yet and is probably located outside of the fsa cluster. The chain is Hybrid PKS-NRPS synthetase fsa1 from Fusarium sp. (strain FN080326).